The following is a 394-amino-acid chain: Phosphoglycerate kinase (394 aa).

Residues 21–23 (DFN), Arg-36, 59–62 (HLGR), Arg-118, and Arg-151 contribute to the substrate site. A Phosphoserine modification is found at Ser-183. ATP contacts are provided by Lys-201 and Gly-292. Residue Thr-299 is modified to Phosphothreonine. ATP is bound by residues Glu-323 and 350-353 (GGDS).

Belongs to the phosphoglycerate kinase family. Monomer.

The protein resides in the cytoplasm. The catalysed reaction is (2R)-3-phosphoglycerate + ATP = (2R)-3-phospho-glyceroyl phosphate + ADP. Its pathway is carbohydrate degradation; glycolysis; pyruvate from D-glyceraldehyde 3-phosphate: step 2/5. The chain is Phosphoglycerate kinase from Bacillus thuringiensis (strain Al Hakam).